Consider the following 446-residue polypeptide: 3',5'-cyclic-AMP phosphodiesterase 7B (446 aa).

Positions 97–420 (LDEDYLGQAR…AQWKSLLSNQ (324 aa)) constitute a PDEase domain. His173 (proton donor) is an active-site residue. A divalent metal cation-binding residues include His177, His213, Asp214, and Asp323. A disordered region spans residues 422–446 (RRRGSGQDLAGPAPETLEQTEGATP). A Phosphoserine modification is found at Ser426. Phosphothreonine is present on Thr445.

The protein belongs to the cyclic nucleotide phosphodiesterase family. PDE7 subfamily. A divalent metal cation serves as cofactor. As to expression, highly expressed in brain.

The enzyme catalyses 3',5'-cyclic AMP + H2O = AMP + H(+). It participates in purine metabolism; 3',5'-cyclic AMP degradation; AMP from 3',5'-cyclic AMP: step 1/1. Inhibited by dipyridamole, IBMX and SCH 51866. Insensitive to zaprinast, rolipram, and milrinone. Functionally, hydrolyzes the second messenger cAMP, which is a key regulator of many important physiological processes. May be involved in the control of cAMP-mediated neural activity and cAMP metabolism in the brain. The chain is 3',5'-cyclic-AMP phosphodiesterase 7B from Mus musculus (Mouse).